A 155-amino-acid polypeptide reads, in one-letter code: Ribosome maturation factor RimP (155 aa).

This sequence belongs to the RimP family.

It is found in the cytoplasm. Required for maturation of 30S ribosomal subunits. The polypeptide is Ribosome maturation factor RimP (Parabacteroides distasonis (strain ATCC 8503 / DSM 20701 / CIP 104284 / JCM 5825 / NCTC 11152)).